The following is a 325-amino-acid chain: MNALTAVKANTDDLAQRHTGFTLAPSAQSPRLLALTFTADTTRQFLHQVAQWPVQALEYKSFLRFKIGKILDDLCGNQLQPLLIKTLLNRAQGALLISAEGIDDVAQAEEMVKLATAVAHLIGRSNYDAMSGQYYARFVVKNVDNSDSYLRQPHRVMELHNDGTYVEEVTDYVLMMKIDEQNMEGGNSLLLHLDDWEHLESFFTHPLARRVMRWAAPPSKNVSHDVWHPVFDVDQQGRPVMRYIDQFVQPKDFEEGVWLSELSDALETSQNILSVPVPVGKFLLINNLFWLHGRDRFTPHPDLRRELMRQRGYFAYAASHYQTHQ.

Positions 160, 162, and 292 each coordinate Fe cation.

It belongs to the glutarate hydroxylase family. In terms of assembly, homotetramer. Fe(2+) is required as a cofactor.

It catalyses the reaction glutarate + 2-oxoglutarate + O2 = (S)-2-hydroxyglutarate + succinate + CO2. It participates in amino-acid degradation. In terms of biological role, acts as an alpha-ketoglutarate-dependent dioxygenase catalyzing hydroxylation of glutarate (GA) to L-2-hydroxyglutarate (L2HG). Functions in a L-lysine degradation pathway that proceeds via cadaverine, glutarate and L-2-hydroxyglutarate. The protein is Glutarate 2-hydroxylase of Salmonella newport (strain SL254).